The chain runs to 212 residues: Thymidylate kinase (212 aa).

At alanine 2 the chain carries N-acetylalanine. Residues arginine 16–threonine 21 and arginine 97 contribute to the ATP site. The segment at leucine 133–glutamine 157 is LID. Position 169 is an N6-acetyllysine (lysine 169). Residues lysine 182 and arginine 192 each contribute to the ATP site.

This sequence belongs to the thymidylate kinase family. Homodimer. Requires Mg(2+) as cofactor.

It carries out the reaction dTMP + ATP = dTDP + ADP. The protein operates within pyrimidine metabolism; dTTP biosynthesis. Catalyzes the phosphorylation of thymidine monophosphate (dTMP) to thymidine diphosphate (dTDP), the immediate precursor for the DNA building block dTTP, with ATP as the preferred phosphoryl donor in the presence of Mg(2+). This Homo sapiens (Human) protein is Thymidylate kinase (DTYMK).